Consider the following 234-residue polypeptide: Ribonuclease HII (234 aa).

The region spanning 16 to 207 (ALVAGVDEAG…VRRMLTPKAI (192 aa)) is the RNase H type-2 domain. Positions 22, 23, and 115 each coordinate a divalent metal cation.

It belongs to the RNase HII family. It depends on Mn(2+) as a cofactor. Requires Mg(2+) as cofactor.

It localises to the cytoplasm. It catalyses the reaction Endonucleolytic cleavage to 5'-phosphomonoester.. In terms of biological role, endonuclease that specifically degrades the RNA of RNA-DNA hybrids. In Xylella fastidiosa (strain M12), this protein is Ribonuclease HII.